The sequence spans 568 residues: 2-succinyl-5-enolpyruvyl-6-hydroxy-3-cyclohexene-1-carboxylate synthase (568 aa).

It belongs to the TPP enzyme family. MenD subfamily. In terms of assembly, homodimer. Requires Mg(2+) as cofactor. Mn(2+) serves as cofactor. Thiamine diphosphate is required as a cofactor.

The catalysed reaction is isochorismate + 2-oxoglutarate + H(+) = 5-enolpyruvoyl-6-hydroxy-2-succinyl-cyclohex-3-ene-1-carboxylate + CO2. It functions in the pathway quinol/quinone metabolism; 1,4-dihydroxy-2-naphthoate biosynthesis; 1,4-dihydroxy-2-naphthoate from chorismate: step 2/7. Its pathway is quinol/quinone metabolism; menaquinone biosynthesis. In terms of biological role, catalyzes the thiamine diphosphate-dependent decarboxylation of 2-oxoglutarate and the subsequent addition of the resulting succinic semialdehyde-thiamine pyrophosphate anion to isochorismate to yield 2-succinyl-5-enolpyruvyl-6-hydroxy-3-cyclohexene-1-carboxylate (SEPHCHC). In Haemophilus influenzae (strain ATCC 51907 / DSM 11121 / KW20 / Rd), this protein is 2-succinyl-5-enolpyruvyl-6-hydroxy-3-cyclohexene-1-carboxylate synthase.